A 55-amino-acid polypeptide reads, in one-letter code: Large ribosomal subunit protein bL32 (55 aa).

Positions 1 to 28 are disordered; sequence MAVQQNKPTRSKRGMRRSHDALTTATLS.

Belongs to the bacterial ribosomal protein bL32 family.

This is Large ribosomal subunit protein bL32 from Serratia proteamaculans (strain 568).